The following is a 529-amino-acid chain: Amino acid transporter heavy chain SLC3A2 (529 aa).

A disordered region spans residues 1 to 20 (MSQDTEVDMKEVELNELEPE). The Cytoplasmic segment spans residues 1-84 (MSQDTEVDMK…SPGWVRTRWA (84 aa)). Residue S2 is modified to Phosphoserine. At T5 the chain carries Phosphothreonine. The segment covering 7–20 (VDMKEVELNELEPE) has biased composition (basic and acidic residues). K49 participates in a covalent cross-link: Glycyl lysine isopeptide (Lys-Gly) (interchain with G-Cter in ubiquitin). S65 carries the phosphoserine modification. K66 participates in a covalent cross-link: Glycyl lysine isopeptide (Lys-Gly) (interchain with G-Cter in SUMO2). Residues 85–105 (LLLLFWLGWIGMLAGAVVIIV) traverse the membrane as a helical; Signal-anchor for type II membrane protein segment. The Extracellular portion of the chain corresponds to 106 to 529 (RAPRCRELPV…GLLLHFPYVA (424 aa)). A glycan (N-linked (GlcNAc...) asparagine) is linked at N266. A phosphoserine mark is found at S307 and S309. N-linked (GlcNAc...) asparagine glycans are attached at residues N325 and N405. S426 is modified (phosphoserine).

This sequence belongs to the SLC3A transporter family. Disulfide-linked heterodimer with a non-glycosylated light chain (SLC7A5, SLC7A6, SLC7A7, SLC7A8, SLC7A10 or SLC7A11). Interacts with TLCD3A/CT120 and ICAM1. Constitutively and specifically associates with beta-1 integrins (alpha-2/beta-1, alpha-3/beta-1, alpha-5/beta-1 and alpha-6/beta-1), but minimally with alpha-4/beta-1. Interacts with LAPTM4B; recruits SLC3A2 and SLC7A5 to lysosomes to promote leucine uptake into these organelles and is required for mTORC1 activation. In terms of processing, phosphorylation on Ser-307 or Ser-309 and on Ser-426 by ecto-protein kinases favors heterotypic cell-cell interactions. N-glycosylated; N-glycosylation is crucial for trafficking and stability of SLC3A2 to the plasma membrane.

It localises to the apical cell membrane. Its subcellular location is the cell membrane. It is found in the cell junction. The protein resides in the lysosome membrane. The protein localises to the melanosome. It localises to the basolateral cell membrane. In terms of biological role, acts as a chaperone that facilitates biogenesis and trafficking of functional transporters heterodimers to the plasma membrane. Forms heterodimer with SLC7 family transporters (SLC7A5, SLC7A6, SLC7A7, SLC7A8, SLC7A10 and SLC7A11), a group of amino-acid antiporters. Heterodimers function as amino acids exchangers, the specificity of the substrate depending on the SLC7A subunit. Heterodimers formed by SLC3A2/SLC7A6 or SLC3A2/SLC7A7 mediate the uptake of dibasic amino acids. Heterodimer SLC3A2/SLC7A11 functions as an antiporter by mediating the exchange of extracellular anionic L-cystine and intracellular L-glutamate across the cellular plasma membrane. SLC3A2/SLC7A10 translocates small neutral L- and D-amino acids across the plasma membrane. SLC3A2/SLC75 or SLC3A2/SLC7A8 translocates neutral amino acids with broad specificity, thyroid hormones and L-DOPA. SLC3A2 is essential for plasma membrane localization, stability, and the transport activity of SLC7A5 and SLC7A8. When associated with LAPTM4B, the heterodimer SLC7A5 is recruited to lysosomes to promote leucine uptake into these organelles, and thereby mediates mTORC1 activation. Modulates integrin-related signaling and is essential for integrin-dependent cell spreading, migration and tumor progression. The polypeptide is Amino acid transporter heavy chain SLC3A2 (Oryctolagus cuniculus (Rabbit)).